Consider the following 115-residue polypeptide: MAIIPKNYARLESGYREKALKIYPWVCGRCSREFVYSNLRELTVHHIDHDHTNNPEDGSNWELLCLYCHDHEHSKYTEADQYGTTVIAGEDAQKDVGEAKYNPFADLKAMMNKKK.

The 49-residue stretch at 27–75 folds into the HNH domain; the sequence is CGRCSREFVYSNLRELTVHHIDHDHTNNPEDGSNWELLCLYCHDHEHSK.

Belongs to the HNH nuclease family.

The polypeptide is Putative HNH nuclease YajD (yajD) (Escherichia coli O157:H7).